The primary structure comprises 353 residues: Peptide methionine sulfoxide reductase MsrA/MsrB (353 aa).

The interval 43–196 is peptide methionine sulfoxide reductase A; the sequence is REIYLAGGCF…PNGYCHIDIT (154 aa). The active site involves cysteine 51. The region spanning 213–336 is the MsrB domain; sequence DAELKAKLTP…NSASIKFIPL (124 aa). The active-site Nucleophile is cysteine 325.

The protein in the N-terminal section; belongs to the MsrA Met sulfoxide reductase family. In the C-terminal section; belongs to the MsrB Met sulfoxide reductase family.

The catalysed reaction is L-methionyl-[protein] + [thioredoxin]-disulfide + H2O = L-methionyl-(S)-S-oxide-[protein] + [thioredoxin]-dithiol. It carries out the reaction [thioredoxin]-disulfide + L-methionine + H2O = L-methionine (S)-S-oxide + [thioredoxin]-dithiol. The enzyme catalyses L-methionyl-[protein] + [thioredoxin]-disulfide + H2O = L-methionyl-(R)-S-oxide-[protein] + [thioredoxin]-dithiol. Functionally, has an important function as a repair enzyme for proteins that have been inactivated by oxidation. Catalyzes the reversible oxidation-reduction of methionine sulfoxide in proteins to methionine. The protein is Peptide methionine sulfoxide reductase MsrA/MsrB (msrAB) of Haemophilus influenzae (strain ATCC 51907 / DSM 11121 / KW20 / Rd).